The following is a 90-amino-acid chain: MHYNAEQKSKIILKFGFNNIKNTGITEVQVALLTQRINALKSHFNKHKQDHHSRRGLLHIVTRRRKLLKYLKKSSVLRYNNLIESLALRH.

Belongs to the universal ribosomal protein uS15 family. Part of the 30S ribosomal subunit. Forms a bridge to the 50S subunit in the 70S ribosome, contacting the 23S rRNA.

In terms of biological role, one of the primary rRNA binding proteins, it binds directly to 16S rRNA where it helps nucleate assembly of the platform of the 30S subunit by binding and bridging several RNA helices of the 16S rRNA. Forms an intersubunit bridge (bridge B4) with the 23S rRNA of the 50S subunit in the ribosome. The polypeptide is Small ribosomal subunit protein uS15 (Blochmanniella floridana).